We begin with the raw amino-acid sequence, 159 residues long: MPKFYCDYCDTYLTHDSPSVRKTHCSGRKHKENVKDYYQKWMEEQAQSLIDKTTAAFQQGKIPPTPFPGAPPPGGSLLPHPSIGGPPRPGMLPAPPMGGPPMMPMMGPPPHAMMPGGPGPGMRPPMGGPMQMMPGPHMMRPPARPMMPAVRPGMVRPDR.

The segment at 4–36 adopts a Matrin-type zinc-finger fold; that stretch reads FYCDYCDTYLTHDSPSVRKTHCSGRKHKENVKD. Residues 61–99 form a disordered region; sequence KIPPTPFPGAPPPGGSLLPHPSIGGPPRPGMLPAPPMGG. Pro residues-rich tracts occupy residues 63 to 74 and 84 to 99; these read PPTPFPGAPPPG and GGPPRPGMLPAPPMGG.

The protein belongs to the U1 small nuclear ribonucleoprotein C family. In terms of assembly, component of the U1 snRNP. The U1 snRNP is composed of the U1 snRNA and the 7 core Sm proteins snrpb, snrpd1, snrpd2, snrpd3, snrpe, snrpf and snrpg that assemble in a heptameric protein ring on the Sm site of the small nuclear RNA to form the core snRNP, and at least 3 U1 snRNP-specific proteins snrnp70/U1-70K, snrpa/U1-A and snrpc/U1-C. snrpc/U1-C interacts with U1 snRNA and the 5' splice-site region of the pre-mRNA.

It localises to the nucleus. Functionally, component of the spliceosomal U1 snRNP, which is essential for recognition of the pre-mRNA 5' splice-site and the subsequent assembly of the spliceosome. snrpc/U1-C is directly involved in initial 5' splice-site recognition for both constitutive and regulated alternative splicing. The interaction with the 5' splice-site seems to precede base-pairing between the pre-mRNA and the U1 snRNA. Stimulates commitment or early (E) complex formation by stabilizing the base pairing of the 5' end of the U1 snRNA and the 5' splice-site region. The protein is U1 small nuclear ribonucleoprotein C of Danio rerio (Zebrafish).